The chain runs to 426 residues: 4-aminobutyrate aminotransferase GabT (426 aa).

Pyridoxal 5'-phosphate is bound by residues 111-112 (GS) and glutamine 242. Lysine 268 is modified (N6-(pyridoxal phosphate)lysine). Threonine 297 provides a ligand contact to pyridoxal 5'-phosphate.

It belongs to the class-III pyridoxal-phosphate-dependent aminotransferase family. In terms of assembly, homotetramer. It depends on pyridoxal 5'-phosphate as a cofactor.

It carries out the reaction 4-aminobutanoate + 2-oxoglutarate = succinate semialdehyde + L-glutamate. The catalysed reaction is 5-aminopentanoate + 2-oxoglutarate = 5-oxopentanoate + L-glutamate. The protein operates within amino-acid degradation; 4-aminobutanoate degradation. It functions in the pathway amino-acid degradation. Pyridoxal phosphate-dependent enzyme that catalyzes transamination between primary amines and alpha-keto acids. Catalyzes the transfer of the amino group from gamma-aminobutyrate (GABA) to alpha-ketoglutarate (KG) to yield succinic semialdehyde (SSA) and glutamate. Thereby functions in a GABA degradation pathway that allows some E.coli strains to utilize GABA as a nitrogen source for growth. Also catalyzes the conversion of 5-aminovalerate to glutarate semialdehyde, as part of a L-lysine degradation pathway that proceeds via cadaverine, glutarate and L-2-hydroxyglutarate. The polypeptide is 4-aminobutyrate aminotransferase GabT (gabT) (Escherichia coli (strain K12)).